A 117-amino-acid polypeptide reads, in one-letter code: Prefoldin subunit beta (117 aa).

It belongs to the prefoldin subunit beta family. In terms of assembly, heterohexamer of two alpha and four beta subunits.

It is found in the cytoplasm. In terms of biological role, molecular chaperone capable of stabilizing a range of proteins. Seems to fulfill an ATP-independent, HSP70-like function in archaeal de novo protein folding. The polypeptide is Prefoldin subunit beta (Pyrococcus furiosus (strain ATCC 43587 / DSM 3638 / JCM 8422 / Vc1)).